The sequence spans 1382 residues: DNA-directed RNA polymerase subunit beta (1382 aa).

It belongs to the RNA polymerase beta chain family. In terms of assembly, the RNAP catalytic core consists of 2 alpha, 1 beta, 1 beta' and 1 omega subunit. When a sigma factor is associated with the core the holoenzyme is formed, which can initiate transcription.

The enzyme catalyses RNA(n) + a ribonucleoside 5'-triphosphate = RNA(n+1) + diphosphate. Its function is as follows. DNA-dependent RNA polymerase catalyzes the transcription of DNA into RNA using the four ribonucleoside triphosphates as substrates. This is DNA-directed RNA polymerase subunit beta from Aliarcobacter butzleri (strain RM4018) (Arcobacter butzleri).